Here is a 444-residue protein sequence, read N- to C-terminus: C4-dicarboxylate transport protein 1 (444 aa).

The next 9 membrane-spanning stretches (helical) occupy residues 9 to 29 (SIFL…VGIP), 42 to 62 (FIKL…VNGI), 78 to 98 (SVIY…VVAY), 152 to 172 (ILQV…VGEQ), 190 to 210 (IMGM…AFTT), 221 to 241 (LGAL…AVLG), 307 to 327 (FSIY…TPLA), 354 to 374 (VILA…LVLV), and 380 to 400 (FMGI…TVTI).

Belongs to the dicarboxylate/amino acid:cation symporter (DAACS) (TC 2.A.23) family.

The protein resides in the cell inner membrane. Functionally, responsible for the transport of dicarboxylates such as succinate, fumarate, and malate from the periplasm across the membrane. The sequence is that of C4-dicarboxylate transport protein 1 from Pseudomonas paraeruginosa (strain DSM 24068 / PA7) (Pseudomonas aeruginosa (strain PA7)).